We begin with the raw amino-acid sequence, 21 residues long: GVLDILKNAAKNILAHAAEQI.

Ile21 is modified (isoleucine amide).

Expressed by the skin dorsal glands.

Its subcellular location is the secreted. Its function is as follows. Has hemolytic activity against human erythrocytes and antibacterial activity against the Gram-negative bacterium E.coli. The polypeptide is Ocellatin-3 (Leptodactylus ocellatus (Argus frog)).